We begin with the raw amino-acid sequence, 237 residues long: Zinc finger AN1 domain-containing stress-associated protein 14 (237 aa).

Positions 1–31 (MATKRKCPANGDDGGVADLEPVAGGSFASPP) are disordered. Residues 171–217 (QPEANRCATCRRKVGLTGFKCRCGGTFCGGHRYADEHGCGFDYKSSG) form an AN1-type zinc finger. C177, C180, C191, C193, C198, H201, H207, and C209 together coordinate Zn(2+).

In terms of biological role, may be involved in environmental stress response. The sequence is that of Zinc finger AN1 domain-containing stress-associated protein 14 (SAP14) from Oryza sativa subsp. japonica (Rice).